The sequence spans 771 residues: Probable cation-transporting ATPase G (771 aa).

Positions 19–86 (GRMRVQATGF…AIIDAETVPA (68 aa)) constitute an HMA domain. The chain crosses the membrane as a helical span at residues 72–92 (AAILSAIIDAETVPAAAVPAY). The interval 122 to 143 (DVAAQPSGETSDACCDGEDNED) is disordered. The next 5 helical transmembrane spans lie at 163 to 183 (VLLT…VVLG), 209 to 229 (VGVG…GELG), 330 to 350 (VFAG…ATAA), 387 to 407 (MIAA…LVWI), and 411 to 431 (LVVL…VTVV). The active-site 4-aspartylphosphate intermediate is the D462. 2 residues coordinate Mg(2+): D651 and D655. 2 consecutive transmembrane segments (helical) span residues 657–677 (PALA…DVAI) and 716–736 (IITV…AVVL).

It belongs to the cation transport ATPase (P-type) (TC 3.A.3) family. Type IB subfamily.

The protein localises to the cell membrane. It catalyses the reaction ATP + H2O = ADP + phosphate + H(+). The protein is Probable cation-transporting ATPase G (ctpG) of Mycobacterium bovis (strain ATCC BAA-935 / AF2122/97).